The chain runs to 360 residues: Homeobox protein ceh-60 (360 aa).

A PBC-A region spans residues 1–82 (MDNLIKQLQM…ENPTFPLEEV (82 aa)). In terms of domain architecture, PBC spans 1–179 (MDNLIKQLQM…ILVLRREIEQ (179 aa)). Residues 85 to 179 (EKDEEWQPLE…ILVLRREIEQ (95 aa)) form a PBC-B region. Residues 180–242 (QGRKRRNFDK…NQRIRTKQQA (63 aa)) constitute a DNA-binding region (homeobox).

It belongs to the TALE/PBX homeobox family. In terms of assembly, forms a heterodimer with homeobox unc-62. Interacts with pqm-1.

The protein localises to the nucleus. Its function is as follows. Probable transcription regulator which binds to DNA, repressing genes involved in longevity and stress, while activating genes involved in reproduction, such as the vitellogenins. Associates with homeobox unc-62 to regulate gene expression, including repression of genes involved in innate immunity. Required for intestinal expression of vitellogenin genes. Negatively modulates longevity, probably independently of effects on vitellogenesis. Involved in lipid homeostasis, contributing to the reallocation of intestinal lipids to the germline and to the formation of the cuticle. Associates with transcriptional regulator pqm-1 at the daf-16 associated element within the promoters of stress-responsive genes to regulate expression. The chain is Homeobox protein ceh-60 from Caenorhabditis elegans.